A 126-amino-acid polypeptide reads, in one-letter code: Aspartate 1-decarboxylase (126 aa).

S25 serves as the catalytic Schiff-base intermediate with substrate; via pyruvic acid. S25 is modified (pyruvic acid (Ser)). Position 57 (T57) interacts with substrate. The active-site Proton donor is the Y58. 73–75 contacts substrate; it reads GAA.

Belongs to the PanD family. Heterooctamer of four alpha and four beta subunits. Pyruvate is required as a cofactor. Post-translationally, is synthesized initially as an inactive proenzyme, which is activated by self-cleavage at a specific serine bond to produce a beta-subunit with a hydroxyl group at its C-terminus and an alpha-subunit with a pyruvoyl group at its N-terminus.

The protein localises to the cytoplasm. The enzyme catalyses L-aspartate + H(+) = beta-alanine + CO2. It participates in cofactor biosynthesis; (R)-pantothenate biosynthesis; beta-alanine from L-aspartate: step 1/1. Catalyzes the pyruvoyl-dependent decarboxylation of aspartate to produce beta-alanine. This is Aspartate 1-decarboxylase from Azotobacter vinelandii (strain DJ / ATCC BAA-1303).